Here is a 792-residue protein sequence, read N- to C-terminus: Zinc finger CCCH domain-containing protein 11A (792 aa).

3 C3H1-type zinc fingers span residues 2–29 (PNQG…HCEA), 31–57 (LGNE…HMEI), and 60–87 (KRSE…HTRS). Disordered regions lie at residues 103–191 (PTVP…VHNG), 223–331 (KKMK…KAGE), and 345–443 (ASQK…RSMQ). At serine 108 the chain carries Phosphoserine. Glycyl lysine isopeptide (Lys-Gly) (interchain with G-Cter in SUMO2) cross-links involve residues lysine 114 and lysine 124. Residues 115-135 (TSQLTVQQSKLSVQSNPSPQL) are compositionally biased toward polar residues. Serine 132 bears the Phosphoserine mark. A Glycyl lysine isopeptide (Lys-Gly) (interchain with G-Cter in SUMO2) cross-link involves residue lysine 140. A phosphoserine mark is found at serine 149, serine 171, and serine 289. The span at 160–175 (ADDDEDDDDQFSEEGD) shows a compositional bias: acidic residues. Basic and acidic residues-rich tracts occupy residues 308–331 (KKVE…KAGE) and 345–360 (ASQK…KAEE). Residues 338 to 360 (EEILLERASQKRGELQTKLKAEE) are a coiled coil. Serine 346 bears the Phosphoserine mark. A compositionally biased stretch (low complexity) spans 367–376 (SPSGTKSSSS). Basic and acidic residues-rich tracts occupy residues 393–405 (QQEM…KKDT) and 431–443 (QPEE…RSMQ). A Glycyl lysine isopeptide (Lys-Gly) (interchain with G-Cter in SUMO2) cross-link involves residue lysine 454. 2 disordered regions span residues 458–531 (ALRV…PTKL) and 545–571 (QRLQ…ASSY). Residues 461–473 (VQQSSESSGNSRP) are compositionally biased toward polar residues. Basic and acidic residues-rich tracts occupy residues 492–501 (GVKEEKKCGL) and 545–558 (QRLQ…KEKA). A Glycyl lysine isopeptide (Lys-Gly) (interchain with G-Cter in SUMO2) cross-link involves residue lysine 601. The interval 690-750 (LSEDKPVTMS…SASTGKPPLS (61 aa)) is disordered. Residues 698 to 715 (MSETENPKDSSVLSSAQA) are compositionally biased toward polar residues. A compositionally biased stretch (low complexity) spans 717–730 (SEPLLPEGSGPSSS).

In terms of assembly, interacts with TREX complex components THOC2, DDX39 and POLDIP3; the interactions are ATP-dependent. Interacts with PABPN1; this interaction retains ZC3H11A in nuclear speckles. Interacts with KPNA3.

It is found in the nucleus speckle. In terms of biological role, through its association with TREX complex components, may participate in the export and post-transcriptional coordination of selected mRNA transcripts, including those required to maintain the metabolic processes in embryonic cells. Binds RNA. The protein is Zinc finger CCCH domain-containing protein 11A (Zc3h11a) of Mus musculus (Mouse).